The primary structure comprises 240 residues: Uridylate kinase (240 aa).

9–12 contacts ATP; it reads KLSG. Glycine 51 contacts UMP. ATP is bound by residues glycine 52 and arginine 56. Residues aspartate 71 and 132–139 contribute to the UMP site; that span reads TGNPFFTT. 3 residues coordinate ATP: threonine 159, tyrosine 165, and aspartate 168.

This sequence belongs to the UMP kinase family. Homohexamer.

It localises to the cytoplasm. It catalyses the reaction UMP + ATP = UDP + ADP. It participates in pyrimidine metabolism; CTP biosynthesis via de novo pathway; UDP from UMP (UMPK route): step 1/1. Its activity is regulated as follows. Inhibited by UTP. In terms of biological role, catalyzes the reversible phosphorylation of UMP to UDP. The protein is Uridylate kinase of Synechococcus elongatus (strain ATCC 33912 / PCC 7942 / FACHB-805) (Anacystis nidulans R2).